The primary structure comprises 242 residues: Probable transcriptional regulatory protein NGK_1508 (242 aa).

It belongs to the TACO1 family.

Its subcellular location is the cytoplasm. This is Probable transcriptional regulatory protein NGK_1508 from Neisseria gonorrhoeae (strain NCCP11945).